The primary structure comprises 146 residues: Large ribosomal subunit protein uL15 (146 aa).

The segment covering 1-13 has biased composition (basic and acidic residues); that stretch reads MKLHELKPAEGSR. Residues 1 to 51 are disordered; sequence MKLHELKPAEGSRKVRNRVGRGIGSGNGKTAGKGHKGQNARSGGGVRLGFE. 2 stretches are compositionally biased toward gly residues: residues 21–31 and 42–51; these read RGIGSGNGKTA and SGGGVRLGFE.

It belongs to the universal ribosomal protein uL15 family. In terms of assembly, part of the 50S ribosomal subunit.

Functionally, binds to the 23S rRNA. This Bacillus cereus (strain G9842) protein is Large ribosomal subunit protein uL15.